We begin with the raw amino-acid sequence, 190 residues long: Potassium-transporting ATPase KdpC subunit (190 aa).

Residues 10–30 traverse the membrane as a helical segment; that stretch reads TFIFLLLITGGVYPLLTTVLG.

The protein belongs to the KdpC family. In terms of assembly, the system is composed of three essential subunits: KdpA, KdpB and KdpC.

Its subcellular location is the cell inner membrane. Functionally, part of the high-affinity ATP-driven potassium transport (or Kdp) system, which catalyzes the hydrolysis of ATP coupled with the electrogenic transport of potassium into the cytoplasm. This subunit acts as a catalytic chaperone that increases the ATP-binding affinity of the ATP-hydrolyzing subunit KdpB by the formation of a transient KdpB/KdpC/ATP ternary complex. This is Potassium-transporting ATPase KdpC subunit from Shigella dysenteriae serotype 1 (strain Sd197).